Reading from the N-terminus, the 567-residue chain is Multidrug and toxin extrusion protein 1 (567 aa).

Position 1 is an N-acetylmethionine (M1). Topologically, residues 1–37 are cytoplasmic; sequence MERTEESAPGPGGADAASERRGLRCLLLPGFLEELRA. S18 carries the phosphoserine modification. Residues 38–58 form a helical membrane-spanning segment; sequence LLVLAGPAFLAQLMMFLISFI. Residues 59 to 72 lie on the Extracellular side of the membrane; that stretch reads SSVFCGHLGKLELD. The helical transmembrane segment at 73-93 threads the bilayer; the sequence is AVTLAIAVINVTGISVGHGLS. The Cytoplasmic portion of the chain corresponds to 94 to 120; that stretch reads SACDTLISQTYGSQNLKHVGVILQRGT. A helical transmembrane segment spans residues 121-141; the sequence is LILLLCCFPCWALFINTEQIL. Topologically, residues 142 to 152 are extracellular; it reads LLFRQDPDVSR. The helical transmembrane segment at 153 to 173 threads the bilayer; sequence LTQTYVMIFIPALPAAFLYTL. The Cytoplasmic portion of the chain corresponds to 174 to 187; the sequence is QVKYLLNQGIVLPQ. A helical transmembrane segment spans residues 188–208; it reads IMTGIAANLVNALANYVFLYH. Residues 209–216 are Extracellular-facing; it reads LHLGVMGS. Residues 217–237 traverse the membrane as a helical segment; the sequence is ALANTISQFALAIFLFLYILW. The Cytoplasmic portion of the chain corresponds to 238–257; the sequence is RRLHQATWGGWSWECLQDWA. The chain crosses the membrane as a helical span at residues 258–277; sequence SFLRLAIPSMLMLCIEWWAY. The Extracellular segment spans residues 278–295; it reads EVGSFLSGILGMVELGAQ. Residues 296–316 traverse the membrane as a helical segment; the sequence is SITYELAIIVYMIPSGFSVAA. Residues 317-336 are Cytoplasmic-facing; the sequence is NVRVGNALGAGNIDQAKKSS. Residues 337 to 357 form a helical membrane-spanning segment; the sequence is AISLIVTELFAVTFCVLLLGC. Over 358–370 the chain is Extracellular; that stretch reads KDLVGYIFTTDRD. Residues 371–391 traverse the membrane as a helical segment; that stretch reads IVALVAQVIPIYAVSHLFEGL. At 392–408 the chain is on the cytoplasmic side; sequence ACTCGGILRGTGNQKVG. A helical membrane pass occupies residues 409–429; sequence AIVNAIGYYVIGLPIGIALMF. Residues 430-437 are Extracellular-facing; that stretch reads AAKLGVIG. The helical transmembrane segment at 438 to 458 threads the bilayer; it reads LWSGIIICTTCQTTCFLAFIA. Residues 459–543 are Cytoplasmic-facing; it reads RLNWKRACQQ…LSGKQLALRR (85 aa). The helical transmembrane segment at 544-564 threads the bilayer; the sequence is GLLLLGVVLVLVGGILVRVYI. Over 565–567 the chain is Extracellular; the sequence is RIE.

This sequence belongs to the multi antimicrobial extrusion (MATE) (TC 2.A.66.1) family. As to expression, predominantly expressed in kidney and liver. Also expressed in various cells, including brain glia-like cells and capillaries, pancreatic duct cells, urinary bladder epithelium, adrenal gland cortex, heart, stomach, small intestine, thyroid gland, testes, alpha cells of the islets of Langerhans, Leydig cells, and vitamin A-storing Ito cells. Expressed in heart, stomach, small intestine, bladder, thyroid gland, adrenal gland and testes (at protein level).

The protein localises to the cell membrane. It is found in the apical cell membrane. The enzyme catalyses thiamine(out) + H(+)(in) = thiamine(in) + H(+)(out). It carries out the reaction estrone 3-sulfate(in) + H(+)(out) = estrone 3-sulfate(out) + H(+)(in). The catalysed reaction is creatinine(in) + H(+)(out) = creatinine(out) + H(+)(in). It catalyses the reaction agmatine(in) + H(+)(out) = agmatine(out) + H(+)(in). Multidrug efflux pump that functions as a H(+)/organic cation antiporter. Plays a physiological role in the excretion of cationic compounds including endogenous metabolites, drugs, toxins through the kidney and liver, into urine and bile respectively. Mediates the efflux of endogenous compounds such as creatinine, vitamin B1/thiamine, agmatine and estrone-3-sulfate. May also contribute to regulate the transport of cationic compounds in testis across the blood-testis-barrier. The sequence is that of Multidrug and toxin extrusion protein 1 (Slc47a1) from Mus musculus (Mouse).